The following is a 469-amino-acid chain: tRNA(Ile)-lysidine synthase (469 aa).

ATP is bound at residue 26–31 (SGGPDS).

It belongs to the tRNA(Ile)-lysidine synthase family.

Its subcellular location is the cytoplasm. The catalysed reaction is cytidine(34) in tRNA(Ile2) + L-lysine + ATP = lysidine(34) in tRNA(Ile2) + AMP + diphosphate + H(+). Functionally, ligates lysine onto the cytidine present at position 34 of the AUA codon-specific tRNA(Ile) that contains the anticodon CAU, in an ATP-dependent manner. Cytidine is converted to lysidine, thus changing the amino acid specificity of the tRNA from methionine to isoleucine. The polypeptide is tRNA(Ile)-lysidine synthase (Clostridium perfringens (strain ATCC 13124 / DSM 756 / JCM 1290 / NCIMB 6125 / NCTC 8237 / Type A)).